A 162-amino-acid polypeptide reads, in one-letter code: UPF0260 protein Atu0932 (162 aa).

Belongs to the UPF0260 family.

The sequence is that of UPF0260 protein Atu0932 from Agrobacterium fabrum (strain C58 / ATCC 33970) (Agrobacterium tumefaciens (strain C58)).